Here is a 269-residue protein sequence, read N- to C-terminus: Probable molybdenum ABC transporter permease protein HVO_B0370 (269 aa).

Helical transmembrane passes span 26 to 46 (LLLA…LVFA), 69 to 89 (VVAA…LAYW), 100 to 120 (VILA…GMLL), 140 to 160 (SLFG…VVTA), 198 to 218 (ILAG…ATLM), and 243 to 263 (FPVA…VHAL). Residues 65–258 (ATNSVVAATL…LVGIAVGAIL (194 aa)) form the ABC transmembrane type-1 domain.

It belongs to the binding-protein-dependent transport system permease family. As to quaternary structure, the complex is composed of two ATP-binding proteins, two transmembrane proteins (HVO_B0370) and a solute-binding protein (HVO_B0369).

Its subcellular location is the cell membrane. Its function is as follows. Part of an ABC transporter complex involved in molybdenum import. Responsible for the translocation of the substrate across the membrane. This chain is Probable molybdenum ABC transporter permease protein HVO_B0370, found in Haloferax volcanii (strain ATCC 29605 / DSM 3757 / JCM 8879 / NBRC 14742 / NCIMB 2012 / VKM B-1768 / DS2) (Halobacterium volcanii).